Here is a 231-residue protein sequence, read N- to C-terminus: Sporulation protein RMD6 (231 aa).

The protein localises to the peroxisome. Required for sporulation. Required for meiotic nuclear division. This chain is Sporulation protein RMD6 (RMD6), found in Saccharomyces cerevisiae (strain ATCC 204508 / S288c) (Baker's yeast).